Reading from the N-terminus, the 371-residue chain is MTEPVRIRVESQAPYDVVVGRGLLGELVDMLRDASVVALVHQPSITTTVETVRDELAAAGLDAHRVEVPDAEDGKSLAVAGFCWEVLGKIGLDRDGVVVSFGGGAVTDVAGFVAGTWMRGVRVVHVPTTLLGMVDAAIGGKAGINTDAGKNLVGVFHEPSAVLVDLATLEGLPRNELVAGMAEVVKAGFIADPEILRLVEADPQGALDPAGEVIAELVRRAIQVKADVVASDLRESHLREVLNYGHTLAHAIERRERYRWRHGAAVSVGLVFAAELARLAGRLDDETADRHKKVLDLLGLPTTYDPDALAQLLEGMRVDKKTRSGVLRFVVLDGLAKPGRLEGPDPSLIAAAYSALTGAPEQKSGGSGVLL.

Residues 70–75 (DAEDGK), 104–108 (GAVTD), 128–129 (TT), Lys-141, and Lys-150 each bind NAD(+). Zn(2+) is bound by residues Glu-183, His-246, and His-262.

Belongs to the sugar phosphate cyclases superfamily. Dehydroquinate synthase family. Co(2+) is required as a cofactor. Zn(2+) serves as cofactor. The cofactor is NAD(+).

The protein localises to the cytoplasm. It catalyses the reaction 7-phospho-2-dehydro-3-deoxy-D-arabino-heptonate = 3-dehydroquinate + phosphate. It participates in metabolic intermediate biosynthesis; chorismate biosynthesis; chorismate from D-erythrose 4-phosphate and phosphoenolpyruvate: step 2/7. Catalyzes the conversion of 3-deoxy-D-arabino-heptulosonate 7-phosphate (DAHP) to dehydroquinate (DHQ). The chain is 3-dehydroquinate synthase from Saccharopolyspora erythraea (strain ATCC 11635 / DSM 40517 / JCM 4748 / NBRC 13426 / NCIMB 8594 / NRRL 2338).